The following is a 254-amino-acid chain: MKMKFGIISIFPEMFKAINDFGVTARAIKDSKVSISCFNPRDYTTDRHATVDDTSFGGGAGMVMKYQPLSAAIEDAKNTLGCGTKVVYLSPQGSIFNHRKAQELLQNDSLILLCGRYEGVDERLIQDYVDEEISVGDFVLSGGELPAMLVMDSLIRLLPEVLGNKESVVEDSFYDGLLDYPHYTKPAVLPNGNAVPDVLLSGNHKEIAKWRRKQKLIRTYERRKDLIECLCLSAKDKQILDDYKIDKVSTKGEE.

S-adenosyl-L-methionine-binding positions include G115 and 135–140 (VGDFVL).

Belongs to the RNA methyltransferase TrmD family. Homodimer.

It is found in the cytoplasm. It catalyses the reaction guanosine(37) in tRNA + S-adenosyl-L-methionine = N(1)-methylguanosine(37) in tRNA + S-adenosyl-L-homocysteine + H(+). In terms of biological role, specifically methylates guanosine-37 in various tRNAs. This Francisella tularensis subsp. tularensis (strain FSC 198) protein is tRNA (guanine-N(1)-)-methyltransferase.